A 1029-amino-acid polypeptide reads, in one-letter code: Translation initiation factor IF-2 (1029 aa).

The disordered stretch occupies residues 73–441 (RELRSEEDDG…RQRRRERKRE (369 aa)). 2 stretches are compositionally biased toward acidic residues: residues 106-121 (TAEEAAEPAVADDEEE) and 148-177 (AEAEPSGDEASAEASADDAPADEAPTDEAE). Positions 183 to 196 (AADKDAAAIADEQK) are enriched in basic and acidic residues. Acidic residues-rich tracts occupy residues 213-234 (TGEETSDTDAATEADATDDAEA), 242-258 (TEAEPETPADETEAEDV), and 279-322 (APDE…DEEG). Positions 358–372 (KDKDKDKSSKKDKKD) are enriched in basic and acidic residues. The segment covering 373–386 (KSNKKSKSKGKKQK) has biased composition (basic residues). Over residues 400-411 (QTLQETLQELEQ) the composition is skewed to low complexity. Residues 417 to 427 (RQRRRRRRRKR) are compositionally biased toward basic residues. Residues 428 to 441 (HEEERQRRRERKRE) are compositionally biased toward basic and acidic residues. The tr-type G domain maps to 524–696 (PRAPVVTVMG…LLQSEIMELK (173 aa)). The segment at 533-540 (GHVDHGKT) is G1. 533–540 (GHVDHGKT) lines the GTP pocket. Residues 558–562 (GITQH) form a G2 region. The interval 582–585 (DTPG) is G3. GTP is bound by residues 582–586 (DTPGH) and 636–639 (NKMD). Residues 636–639 (NKMD) form a G4 region. The tract at residues 672–674 (SAK) is G5.

This sequence belongs to the TRAFAC class translation factor GTPase superfamily. Classic translation factor GTPase family. IF-2 subfamily.

It localises to the cytoplasm. Functionally, one of the essential components for the initiation of protein synthesis. Protects formylmethionyl-tRNA from spontaneous hydrolysis and promotes its binding to the 30S ribosomal subunits. Also involved in the hydrolysis of GTP during the formation of the 70S ribosomal complex. This is Translation initiation factor IF-2 from Salinibacter ruber (strain DSM 13855 / M31).